Here is a 155-residue protein sequence, read N- to C-terminus: Protein archease-like (155 aa).

Asp26, Asp154, and Ile155 together coordinate Ca(2+).

This sequence belongs to the archease family.

Component of the tRNA-splicing ligase complex required to facilitate the enzymatic turnover of catalytic subunit RtcB (F16A11.2). The polypeptide is Protein archease-like (Caenorhabditis elegans).